The primary structure comprises 150 residues: Ribosomal RNA large subunit methyltransferase H (150 aa).

S-adenosyl-L-methionine contacts are provided by residues alanine 100 and 118 to 123 (LSEMTF).

It belongs to the RNA methyltransferase RlmH family. In terms of assembly, homodimer.

The protein localises to the cytoplasm. The enzyme catalyses pseudouridine(1915) in 23S rRNA + S-adenosyl-L-methionine = N(3)-methylpseudouridine(1915) in 23S rRNA + S-adenosyl-L-homocysteine + H(+). In terms of biological role, specifically methylates the pseudouridine at position 1915 (m3Psi1915) in 23S rRNA. The protein is Ribosomal RNA large subunit methyltransferase H of Helicobacter pylori (strain Shi470).